The primary structure comprises 521 residues: Bifunctional dihydrofolate reductase-thymidylate synthase (521 aa).

Residues 22 to 232 (AFSLVVAVDE…TKYYFEKLIP (211 aa)) form the DHFR domain. A substrate-binding site is contributed by V26. NADP(+) is bound by residues A28 and 34–40 (GIGDGRS). D48 contributes to the substrate binding site. Residues 78 to 80 (RKT) and 99 to 102 (LSST) each bind NADP(+). Substrate-binding residues include I154, Y160, and T178. An NADP(+)-binding site is contributed by 155–162 (GGGSVYAE). Residues 237-521 (EEQYLSLVDR…YPPISMKMAV (285 aa)) form a thymidylate synthase region. Residue R257 participates in dUMP binding. C403 is a catalytic residue. Residues H404, 422–426 (QRSCD), N434, and 464–466 (HVY) each bind dUMP.

This sequence in the N-terminal section; belongs to the dihydrofolate reductase family. It in the C-terminal section; belongs to the thymidylate synthase family. In terms of assembly, homodimer.

It catalyses the reaction (6S)-5,6,7,8-tetrahydrofolate + NADP(+) = 7,8-dihydrofolate + NADPH + H(+). It carries out the reaction dUMP + (6R)-5,10-methylene-5,6,7,8-tetrahydrofolate = 7,8-dihydrofolate + dTMP. Its pathway is cofactor biosynthesis; tetrahydrofolate biosynthesis; 5,6,7,8-tetrahydrofolate from 7,8-dihydrofolate: step 1/1. Bifunctional enzyme. Involved in de novo dTMP biosynthesis. Key enzyme in folate metabolism. Catalyzes an essential reaction for de novo glycine and purine synthesis, DNA precursor synthesis, and for the conversion of dUMP to dTMP. This chain is Bifunctional dihydrofolate reductase-thymidylate synthase, found in Trypanosoma cruzi.